The sequence spans 108 residues: Pyrimidine/purine nucleoside phosphorylase (108 aa).

This sequence belongs to the nucleoside phosphorylase PpnP family.

It carries out the reaction a purine D-ribonucleoside + phosphate = a purine nucleobase + alpha-D-ribose 1-phosphate. The catalysed reaction is adenosine + phosphate = alpha-D-ribose 1-phosphate + adenine. It catalyses the reaction cytidine + phosphate = cytosine + alpha-D-ribose 1-phosphate. The enzyme catalyses guanosine + phosphate = alpha-D-ribose 1-phosphate + guanine. It carries out the reaction inosine + phosphate = alpha-D-ribose 1-phosphate + hypoxanthine. The catalysed reaction is thymidine + phosphate = 2-deoxy-alpha-D-ribose 1-phosphate + thymine. It catalyses the reaction uridine + phosphate = alpha-D-ribose 1-phosphate + uracil. The enzyme catalyses xanthosine + phosphate = alpha-D-ribose 1-phosphate + xanthine. Its function is as follows. Catalyzes the phosphorolysis of diverse nucleosides, yielding D-ribose 1-phosphate and the respective free bases. Can use uridine, adenosine, guanosine, cytidine, thymidine, inosine and xanthosine as substrates. Also catalyzes the reverse reactions. The polypeptide is Pyrimidine/purine nucleoside phosphorylase (Polaromonas sp. (strain JS666 / ATCC BAA-500)).